The following is a 202-amino-acid chain: Ribosomal RNA small subunit methyltransferase G (202 aa).

Residues G75, F80, 125–126 (VQ), and R139 each bind S-adenosyl-L-methionine.

Belongs to the methyltransferase superfamily. RNA methyltransferase RsmG family.

It is found in the cytoplasm. Its function is as follows. Specifically methylates the N7 position of a guanine in 16S rRNA. This Mesomycoplasma hyopneumoniae (strain 7448) (Mycoplasma hyopneumoniae) protein is Ribosomal RNA small subunit methyltransferase G.